We begin with the raw amino-acid sequence, 500 residues long: MTLWCTVLGALLTVVGCLCLSLLLRHRRPWEPPLDKGFVPWLGHSMAFRKNMFEFLKGMRAKHGDVFTVQLGGQYFTFVMDPLSFGPIIKNTEKALDFQSYAKELVLKVFGYQSVDGDHRMIHLASTKHLMGQGLEELNQAMLDSLSLVMLGPKGSSLGASSWCEDGLFHFCYRILFKAGFLSLFGYTKDKQQDLDEADELFRKFRRFDFLFPRFVYSLLGPREWVEVSQLQRLFHQRLSVEQNLEKDGISCWLGYMLQFLREQGIASSMQDKFNFMMLWASQGNTGPTCFWVLLFLLKHQDAMKAVREEATRVMGKARLEAKKSFTFTPSALKHTPVLDSVMEESLRLCATPTLLRVVQEDYVLKMASGQEYQIRRGDKVALFPYLSVHMDPDIHPEPTAFKYDRFLNPDGTRKVDFYKSGKKIHHYSMPWGSGVSKCPGRFFALSEMKTFVLLMIMYFDFKLVDPDIPVPPIDPRRWGFGTSQPSHEVRFLYRLKPVQ.

A helical membrane pass occupies residues 4–24; it reads WCTVLGALLTVVGCLCLSLLL. Position 325 is a phosphoserine (Ser325). A heme-binding site is contributed by Cys439.

The protein belongs to the cytochrome P450 family. Heme is required as a cofactor. In terms of tissue distribution, expressed in liver.

The protein resides in the endoplasmic reticulum membrane. It localises to the microsome membrane. It carries out the reaction 7alpha-hydroxycholest-4-en-3-one + reduced [NADPH--hemoprotein reductase] + O2 = 7alpha,12alpha-dihydroxycholest-4-en-3-one + oxidized [NADPH--hemoprotein reductase] + H2O + H(+). The catalysed reaction is 5beta-cholestane-3alpha,7alpha-diol + reduced [NADPH--hemoprotein reductase] + O2 = 5beta-cholestane-3alpha,7alpha,12alpha-triol + oxidized [NADPH--hemoprotein reductase] + H2O + H(+). The enzyme catalyses chenodeoxycholate + reduced [NADPH--hemoprotein reductase] + O2 = cholate + oxidized [NADPH--hemoprotein reductase] + H2O + H(+). The protein operates within lipid metabolism; bile acid biosynthesis. In terms of biological role, a cytochrome P450 monooxygenase involved in primary bile acid biosynthesis. Catalyzes the 12alpha-hydroxylation of 7alpha-hydroxy-4-cholesten-3-one, an intermediate metabolite in cholic acid biosynthesis. Controls biliary balance of cholic acid and chenodeoxycholic acid, ultimately regulating the intestinal absorption of dietary lipids. Mechanistically, uses molecular oxygen inserting one oxygen atom into a substrate, and reducing the second into a water molecule, with two electrons provided by NADPH via cytochrome P450 reductase (CPR; NADPH--hemoprotein reductase). This Mus musculus (Mouse) protein is 7-alpha-hydroxycholest-4-en-3-one 12-alpha-hydroxylase (Cyp8b1).